Reading from the N-terminus, the 479-residue chain is Serine carboxypeptidase-like 44 (479 aa).

Positions 1-22 are cleaved as a signal peptide; the sequence is MVGGKWRFLEVAVVVMVLQWSC. 3 cysteine pairs are disulfide-bonded: Cys-92–Cys-352, Cys-253–Cys-270, and Cys-295–Cys-320. A glycan (N-linked (GlcNAc...) asparagine) is linked at Asn-143. Ser-184 is an active-site residue. The N-linked (GlcNAc...) asparagine glycan is linked to Asn-265. Asn-341 carries N-linked (GlcNAc...) asparagine glycosylation. Asp-389 is an active-site residue. N-linked (GlcNAc...) asparagine glycosylation is present at Asn-411. The active site involves His-446.

This sequence belongs to the peptidase S10 family. Expressed in seedlings.

It is found in the secreted. Its function is as follows. Probable carboxypeptidase. In Arabidopsis thaliana (Mouse-ear cress), this protein is Serine carboxypeptidase-like 44 (SCPL44).